A 453-amino-acid chain; its full sequence is Glutamate-rich protein 5 (453 aa).

3 disordered regions span residues 1–38 (MGCS…ALGR), 66–377 (NGVQ…EHPA), and 394–453 (TNEE…HSML). Over residues 11–21 (AGDDNRLRSAT) the composition is skewed to basic and acidic residues. Ser155 bears the Phosphoserine mark. 2 stretches are compositionally biased toward polar residues: residues 230–243 (LQET…SQPL) and 271–283 (QETL…SQLR). Basic and acidic residues-rich tracts occupy residues 305-332 (EEEK…EHGG), 364-374 (IQPERTVESME), and 394-403 (TNEEDQHIEG). Residues 404-413 (ETGETVETEM) are compositionally biased toward acidic residues. Residues 414-424 (ESEKVSEGAET) are compositionally biased toward basic and acidic residues.

This is Glutamate-rich protein 5 (ERICH5) from Bos taurus (Bovine).